We begin with the raw amino-acid sequence, 161 residues long: Nucleoside diphosphate kinase (161 aa).

6 residues coordinate ATP: K13, F61, R89, T95, R106, and N116. H119 serves as the catalytic Pros-phosphohistidine intermediate.

This sequence belongs to the NDK family. The cofactor is Mg(2+).

The protein localises to the cytoplasm. It carries out the reaction a 2'-deoxyribonucleoside 5'-diphosphate + ATP = a 2'-deoxyribonucleoside 5'-triphosphate + ADP. It catalyses the reaction a ribonucleoside 5'-diphosphate + ATP = a ribonucleoside 5'-triphosphate + ADP. In terms of biological role, major role in the synthesis of nucleoside triphosphates other than ATP. The ATP gamma phosphate is transferred to the NDP beta phosphate via a ping-pong mechanism, using a phosphorylated active-site intermediate. The sequence is that of Nucleoside diphosphate kinase from Halobacterium salinarum (strain ATCC 29341 / DSM 671 / R1).